We begin with the raw amino-acid sequence, 355 residues long: S-adenosylmethionine:tRNA ribosyltransferase-isomerase (355 aa).

It belongs to the QueA family. As to quaternary structure, monomer.

The protein resides in the cytoplasm. It catalyses the reaction 7-aminomethyl-7-carbaguanosine(34) in tRNA + S-adenosyl-L-methionine = epoxyqueuosine(34) in tRNA + adenine + L-methionine + 2 H(+). It functions in the pathway tRNA modification; tRNA-queuosine biosynthesis. Transfers and isomerizes the ribose moiety from AdoMet to the 7-aminomethyl group of 7-deazaguanine (preQ1-tRNA) to give epoxyqueuosine (oQ-tRNA). The sequence is that of S-adenosylmethionine:tRNA ribosyltransferase-isomerase from Burkholderia orbicola (strain MC0-3).